Reading from the N-terminus, the 351-residue chain is Putative aminodehydroquinate synthase (351 aa).

NAD(+)-binding positions include 65–68 (EPTK), 97–101 (GTTTD), 121–122 (TS), lysine 134, lysine 143, and 161–164 (YLTT). Zn(2+)-binding residues include glutamate 176, histidine 225, and histidine 241.

It belongs to the sugar phosphate cyclases superfamily. aDHQS family. NAD(+) is required as a cofactor. Requires Co(2+) as cofactor. It depends on Zn(2+) as a cofactor.

Its function is as follows. May catalyze the conversion of 3,4-dideoxy-4-amino-D-arabino-heptulosonate 7-phosphate (aDAHP) to 5-deoxy-5-amino-3-dehydroquinate (aDHQ). Probably involved in the formation of 3-amino-5-hydroxybenzoic acid (AHBA), the precursor of rifamycin and related ansamycins. The protein is Putative aminodehydroquinate synthase of Amycolatopsis mediterranei (strain S699) (Nocardia mediterranei).